Consider the following 157-residue polypeptide: UPF0262 protein RHECIAT_CH0000657 (157 aa).

It belongs to the UPF0262 family.

This is UPF0262 protein RHECIAT_CH0000657 from Rhizobium etli (strain CIAT 652).